The chain runs to 307 residues: Probable RuBisCO transcriptional regulator (307 aa).

The 58-residue stretch at 5–62 folds into the HTH lysR-type domain; that stretch reads FTLQQLRIFKAIASEKSFTQAAEILFVSQPSLSKQIKTLENRLGILLLNRTGNKILLT. A DNA-binding region (H-T-H motif) is located at residues 22–41; it reads FTQAAEILFVSQPSLSKQIK.

It belongs to the LysR transcriptional regulatory family.

The protein localises to the plastid. The protein resides in the chloroplast. Trans-acting transcriptional regulator of RuBisCO genes (rbcL and rbcS) expression. In Thalassiosira pseudonana (Marine diatom), this protein is Probable RuBisCO transcriptional regulator (rbcR-A).